We begin with the raw amino-acid sequence, 316 residues long: DMOA farnesyltransferase nvfB (316 aa).

9 consecutive transmembrane segments (helical) span residues 47-67 (VVGV…TILL), 71-91 (LILV…NDVI), 115-135 (WNAV…LSFL), 139-159 (CAIE…GKRF), 162-182 (FPQL…HSLG), 191-211 (PTFF…VVYS), 234-254 (IELL…AAGY), 258-278 (LGIP…LYFL), and 294-314 (KLAC…EYYL).

It belongs to the UbiA prenyltransferase family.

Its subcellular location is the membrane. It carries out the reaction 3,5-dimethylorsellinate + (2E,6E)-farnesyl diphosphate = (3R)-3-farnesyl-6-hydroxy-2,3,5-trimethyl-4-oxocyclohexa-1,5-diene-1-carboxylate + diphosphate + H(+). Its pathway is secondary metabolite biosynthesis; terpenoid biosynthesis. In terms of biological role, DMOA farnesyltransferase; part of the gene cluster that mediates the biosynthesis of novofumigatonin, a heavily oxygenated meroterpenoid containing a unique orthoester moiety. The first step of the pathway is the synthesis of 3,5-dimethylorsellinic acid (DMOA) by the polyketide synthase nvfA via condensation of one acetyl-CoA starter unit with 3 malonyl-CoA units and 2 methylations. DMOA is then converted to farnesyl-DMOA by the farnesyltransferase nvfB. Epoxydation by FAD-dependent monooxygenase nvfK, followed by a protonation-initiated cyclization catalyzed by the terpene cyclase nvfL leads to the production of asnavolin H. The short chain dehydrogenase nvfC then as a 3-OH dehydrogenase of asnovolin H to yield chemesin D. There are two branches to synthesize asnovolin A from chemesin D. In one branch, chemesin D undergoes Baeyer-Villiger oxidation by nvfH, methylation by nvfJ, and enoyl reduction by the nvfM D enoylreductase that reduces the double bond between C-5'and C-6', to form respectively asnovolin I, asnovolin K, and asnovolin A. In the other branch, the methylation precedes the Baeyer-Villiger oxidation and the enoyl reduction to yield asnovolin A via the asnovolin J intermediate. Asnovolin A is further converted to fumigatonoid A by the Fe(II)/2-oxoglutarate-dependent dioxygenase nvfI that catalyzes an endoperoxidation reaction. The alpha/beta hydrolase nvfD then acts as an epimerase that converts fumigatonoid A to its C-5' epimer, which then undergoes spontaneous or nvfD-catalyzed lactonization. The following step utilizes the ketoreductase nvfG to produce fumigatonoid B. The dioxygenase nvfE further converts fumigatonoid B into fumigatonoid C. Finally the Fe(II)/2-oxoglutarate-dependent dioxygenase nvfF catalyzes two rounds of oxidation to transform fumigatonoid C into the end product, novofumigatonin A. The polypeptide is DMOA farnesyltransferase nvfB (Aspergillus novofumigatus (strain IBT 16806)).